Reading from the N-terminus, the 404-residue chain is Tryptophan synthase beta chain (404 aa).

At K98 the chain carries N6-(pyridoxal phosphate)lysine.

Belongs to the TrpB family. Tetramer of two alpha and two beta chains. It depends on pyridoxal 5'-phosphate as a cofactor.

The enzyme catalyses (1S,2R)-1-C-(indol-3-yl)glycerol 3-phosphate + L-serine = D-glyceraldehyde 3-phosphate + L-tryptophan + H2O. It participates in amino-acid biosynthesis; L-tryptophan biosynthesis; L-tryptophan from chorismate: step 5/5. In terms of biological role, the beta subunit is responsible for the synthesis of L-tryptophan from indole and L-serine. In Rhodopseudomonas palustris (strain BisA53), this protein is Tryptophan synthase beta chain.